We begin with the raw amino-acid sequence, 189 residues long: GTP cyclohydrolase 1 (189 aa).

Positions 79, 82, and 150 each coordinate Zn(2+).

It belongs to the GTP cyclohydrolase I family. In terms of assembly, homomer.

It catalyses the reaction GTP + H2O = 7,8-dihydroneopterin 3'-triphosphate + formate + H(+). It participates in cofactor biosynthesis; 7,8-dihydroneopterin triphosphate biosynthesis; 7,8-dihydroneopterin triphosphate from GTP: step 1/1. The protein is GTP cyclohydrolase 1 of Rickettsia peacockii (strain Rustic).